A 124-amino-acid chain; its full sequence is Large ribosomal subunit protein mL52 (124 aa).

Residues 1–23 constitute a mitochondrion transit peptide; sequence MAALGMLLSTGVRRLHCGSAARA. The disordered stretch occupies residues 99–124; sequence LQEEKRKQQNALKPKGVLLQNPGPSQ.

The protein belongs to the mitochondrion-specific ribosomal protein mL52 family. As to quaternary structure, component of the mitochondrial ribosome large subunit (39S) which comprises a 16S rRNA and about 50 distinct proteins.

It is found in the mitochondrion. This chain is Large ribosomal subunit protein mL52 (MRPL52), found in Bos taurus (Bovine).